We begin with the raw amino-acid sequence, 411 residues long: LIM domain-binding protein 1 (411 aa).

S2 carries the post-translational modification N-acetylserine. T61 is modified (phosphothreonine). Phosphoserine occurs at positions 265 and 302. 2 disordered regions span residues 284 to 330 and 367 to 411; these read PPAE…TFAL and DAAN…QASQ. The span at 302–318 shows a compositional bias: low complexity; the sequence is SGGSTMSSGGGNTNNSN. In terms of domain architecture, LIM interaction domain (LID) spans 336 to 375; that stretch reads DVMVVGEPTLMGGEFGDEDERLITRLENTQFDAANGIDDE.

The protein belongs to the LDB family. As to quaternary structure, interacts with ESR1. Forms homodimers and heterodimers. Interacts with and activates LHX1/LIM1. Interacts with the LIM domains of ISL1 and LMO2. Can assemble in a complex with LMO2 and TAL1/SCL but does not interact with TAL1/SCL directly. Strongly interacts with the LIM2 domain of LMX1A and more weakly with the LIM1 domain. Homodimerization is not required for, and does not effect, LMX1A-binding. Component of a nuclear TAL-1 complex composed at least of CBFA2T3, LDB1, TAL1 and TCF3. Interacts with LHX6 and LHX9. At neuronal promoters, forms a complex with LHX3 involved in the specification of interneurons, in motor neurons, it is displaced by ISL1 to form a ternary complex in which ISL1 contacts both LHX3 and LDB1. Interacts with SLK; leading to negatively regulate SLK kinase activity. Interacts with YWHAZ. Interacts with PRDM1/BLIMP1. Interacts with LMO4. Interacts with RLIM/RNF12; the interaction inhibits the ubiquitination of LMO proteins. Post-translationally, ubiquitinated by RLIM/RNF12, leading to its degradation by the proteasome. In terms of tissue distribution, expressed in multiple adult tissues including heart, brain, liver, kidney, testis, lung and muscle, with expression highest in the pituitary gland and skin.

It localises to the nucleus. Functionally, binds to the LIM domain of a wide variety of LIM domain-containing transcription factors. May regulate the transcriptional activity of LIM-containing proteins by determining specific partner interactions. Plays a role in the development of interneurons and motor neurons in cooperation with LHX3 and ISL1. Acts synergistically with LHX1/LIM1 in axis formation and activation of gene expression. Acts with LMO2 in the regulation of red blood cell development, maintaining erythroid precursors in an immature state. In Mus musculus (Mouse), this protein is LIM domain-binding protein 1 (Ldb1).